Here is a 413-residue protein sequence, read N- to C-terminus: 3-oxo-tetronate kinase (413 aa).

ATP contacts are provided by residues serine 254, 354–357 (GGET), and glycine 397.

The protein belongs to the four-carbon acid sugar kinase family.

The enzyme catalyses 3-dehydro-L-erythronate + ATP = 3-dehydro-4-O-phospho-L-erythronate + ADP + H(+). It carries out the reaction 3-dehydro-D-erythronate + ATP = 3-dehydro-4-O-phospho-D-erythronate + ADP + H(+). Its function is as follows. Catalyzes the ATP-dependent phosphorylation of 3-oxo-tetronate to 3-oxo-tetronate 4-phosphate. This chain is 3-oxo-tetronate kinase, found in Haemophilus influenzae (strain ATCC 51907 / DSM 11121 / KW20 / Rd).